The sequence spans 90 residues: MDDMSPRLRAFLSEPIGEKDVAWVDGISRELAINLVTKGFNKAYVLLGQFLLMHKNEAEFQRWIICCCGATECEARQSSTCLKEWCSCFL.

Homodimer. Heterodimerizes with BANF1.

Its subcellular location is the nucleus. The protein resides in the cytoplasm. May play a role in BANF1 regulation and influence tissue-specific roles of BANF1. The polypeptide is Barrier-to-autointegration factor-like protein (Banf2) (Mus musculus (Mouse)).